Reading from the N-terminus, the 309-residue chain is Non-homologous end-joining factor 1 (309 aa).

The segment at 1–134 (MEAVLSALPW…TPVAVVCRQL (134 aa)) is globular head. Residues 223–298 (GKTGRKRKHS…AGSEDRSTSR (76 aa)) are C-terminal tail. Residues 223–309 (GKTGRKRKHS…KKKKAVGLFR (87 aa)) are disordered. Basic and acidic residues predominate over residues 243–252 (HITDHQHISE). Composition is skewed to polar residues over residues 253 to 265 (STDV…SQEH) and 273 to 290 (RSQV…STAG). Residues 297–309 (SRAKKKKAVGLFR) show a composition bias toward basic residues. The XLM signature appears at 299-309 (AKKKKAVGLFR).

It belongs to the XRCC4-XLF family. XLF subfamily. Homodimer. Interacts with xrcc4; the interaction is direct and is mediated via a head-to-head interaction between N-terminal head regions. Component of the core long-range non-homologous end joining (NHEJ) complex (also named DNA-PK complex) composed of prkdc/DNA-PKcs, lig4, xrcc4, xrcc6/Ku70, xrcc5/Ku80 and nhej1/xlf.

Its subcellular location is the nucleus. It is found in the chromosome. In terms of biological role, DNA repair protein involved in DNA non-homologous end joining (NHEJ); it is required for double-strand break (DSB) repair and V(D)J recombination and is also involved in telomere maintenance. Plays a key role in NHEJ by promoting the ligation of various mismatched and non-cohesive ends. In some studies, has been shown to associate with xrcc4 to form alternating helical filaments that bridge DNA and act like a bandage, holding together the broken DNA until it is repaired. Alternatively, it has also been shown that rather than forming filaments, a single nhej1 dimer interacts through both head domains with xrcc4 to promote the close alignment of DNA ends. The xrcc4-nhej1/xlf subcomplex binds to the DNA fragments of a DSB in a highly diffusive manner and robustly bridges two independent DNA molecules, holding the broken DNA fragments in close proximity to one other. The mobility of the bridges ensures that the ends remain accessible for further processing by other repair factors. The polypeptide is Non-homologous end-joining factor 1 (nhej1) (Danio rerio (Zebrafish)).